Here is a 505-residue protein sequence, read N- to C-terminus: Probable ribonuclease FAU-1 (505 aa).

Residues 389–408 (ISGHGSGTYDELGTPRESGD) are disordered.

It belongs to the FAU-1 family.

In terms of biological role, probable RNase involved in rRNA stability through maturation and/or degradation of precursor rRNAs. Binds to RNA in loop regions with AU-rich sequences. The sequence is that of Probable ribonuclease FAU-1 from Haloquadratum walsbyi (strain DSM 16790 / HBSQ001).